Here is a 697-residue protein sequence, read N- to C-terminus: Potassium-transporting ATPase ATP-binding subunit (697 aa).

Helical transmembrane passes span 55 to 75 (PIMFVVEIGFIITLILSFLPS), 82 to 102 (GWFNITVSLILLFTVLFANFA), 245 to 265 (LTLIFLIVVVTLPIFTNYLGF), and 271 to 291 (VLVALLVCLIPTTIGGLLSAI). Aspartate 324 functions as the 4-aspartylphosphate intermediate in the catalytic mechanism. ATP contacts are provided by residues aspartate 361, glutamate 365, 393-400 (FKAETRMS), and lysine 412. 2 residues coordinate Mg(2+): aspartate 535 and aspartate 539. The next 3 membrane-spanning stretches (helical) occupy residues 605–625 (FAIIPAMFTLAIPQMEALNIM), 633–653 (AILSALIFNAVIIPLLIPLAM), and 677–697 (GGVIVPFIGIKVIDMIVGLFI).

This sequence belongs to the cation transport ATPase (P-type) (TC 3.A.3) family. Type IA subfamily. As to quaternary structure, the system is composed of three essential subunits: KdpA, KdpB and KdpC.

It is found in the cell membrane. The catalysed reaction is K(+)(out) + ATP + H2O = K(+)(in) + ADP + phosphate + H(+). Part of the high-affinity ATP-driven potassium transport (or Kdp) system, which catalyzes the hydrolysis of ATP coupled with the electrogenic transport of potassium into the cytoplasm. This subunit is responsible for energy coupling to the transport system and for the release of the potassium ions to the cytoplasm. The polypeptide is Potassium-transporting ATPase ATP-binding subunit (Bacillus mycoides (strain KBAB4) (Bacillus weihenstephanensis)).